The sequence spans 122 residues: MKIILFLTLIALASSELYHYQECVRGTTVLLKEPCPSGTYEGNSPFHPLADNKFALTCISTHFAFACADGTRHTYQLRARSVSPKLFTRQEEVHQELYSPLFLIVAALVFIILCFTIKRKTE.

A signal peptide spans 1-15; that stretch reads MKIILFLTLIALASS. An X4e domain is found at 16–81; sequence ELYHYQECVR…RHTYQLRARS (66 aa). The Virion surface segment spans residues 16-96; that stretch reads ELYHYQECVR…FTRQEEVHQE (81 aa). Cystine bridges form between cysteine 23-cysteine 58 and cysteine 35-cysteine 67. A helical membrane pass occupies residues 97–117; it reads LYSPLFLIVAALVFIILCFTI. Topologically, residues 118 to 122 are intravirion; sequence KRKTE. Residues 118-122 carry the Di-lysine motif motif; it reads KRKTE.

Interacts with the spike glycoprotein, M protein, E protein and the accessory protein 3.

It is found in the virion. The protein localises to the host endoplasmic reticulum membrane. It localises to the host endoplasmic reticulum-Golgi intermediate compartment membrane. Its subcellular location is the host Golgi apparatus membrane. Functionally, non-structural protein which is dispensable for virus replication in cell culture. In Rhinolophus macrotis (Big-eared horseshoe bat), this protein is Protein 7a.